A 497-amino-acid polypeptide reads, in one-letter code: MASLLDRYLRNISDKSQQNLASVAYLASLDHLLHAFPSIGQSIVQELKSQRSRLKMIASENFSSLSVQLAMGNLLTDKYCEGSPFKRFYSCCENVDAIEWECAETAKELFGAESAFVQPHSGADANLLAIMSIITQKIQSPAVQQLGYKTINDLPEQEYEALKAEMAQHKCLGPSLNSGGHLTHGTVRMNIMSKLMHCLPYEVNLDTELFDYDEIAKIAKEHKPTVLIAGYSSYSRRFNFATLKQIAEDCGAVLWVDMAHFAGLVAGGVFVGEENPMPYADIVTTTTHKTLRGPRGGLVLAKKEYANTLNKACPLMMGGPLPHVIAAKAIALKEAMTINFRKYAHKVVENAQTLAEVFQRNGLRLLTGGTDNHMLIIDLTSLGVPGRIAEDMLTSVGIAVNRNTIPSDASGQWKTSGIRLGTPALTTLGMGSAEMEEVANIIVKVLRNITVRSNAESGSSKSEGELSEGIAQEARQRVADLLGRFPLYPEIDLETLV.

Residues L176 and 180–182 each bind (6S)-5,6,7,8-tetrahydrofolate; that span reads GHL. K289 is subject to N6-(pyridoxal phosphate)lysine.

Belongs to the SHMT family. In terms of assembly, homodimer. It depends on pyridoxal 5'-phosphate as a cofactor.

It localises to the cytoplasm. It carries out the reaction (6R)-5,10-methylene-5,6,7,8-tetrahydrofolate + glycine + H2O = (6S)-5,6,7,8-tetrahydrofolate + L-serine. It participates in one-carbon metabolism; tetrahydrofolate interconversion. The protein operates within amino-acid biosynthesis; glycine biosynthesis; glycine from L-serine: step 1/1. In terms of biological role, catalyzes the reversible interconversion of serine and glycine with tetrahydrofolate (THF) serving as the one-carbon carrier. This reaction serves as the major source of one-carbon groups required for the biosynthesis of purines, thymidylate, methionine, and other important biomolecules. Also exhibits THF-independent aldolase activity toward beta-hydroxyamino acids, producing glycine and aldehydes, via a retro-aldol mechanism. The protein is Serine hydroxymethyltransferase of Chlamydia trachomatis serovar L2b (strain UCH-1/proctitis).